The following is a 244-amino-acid chain: Lymphotoxin-beta (244 aa).

Residues 1–18 (MGALGLEGRGGRLQGRGS) lie on the Cytoplasmic side of the membrane. The helical; Signal-anchor for type II membrane protein transmembrane segment at 19-48 (LLLAVAGATSLVTLLLAVPITVLAVLALVP) threads the bilayer. The Extracellular segment spans residues 49–244 (QDQGGLVTET…KTFFGAVMVG (196 aa)). The region spanning 88–243 (PAAHLIGAPL…GKTFFGAVMV (156 aa)) is the THD domain. An N-linked (GlcNAc...) asparagine glycan is attached at asparagine 222.

It belongs to the tumor necrosis factor family. Heterotrimer of either two LTB and one LTA subunits or (less prevalent) two LTA and one LTB subunits.

Its subcellular location is the membrane. In terms of biological role, cytokine that binds to LTBR/TNFRSF3. May play a specific role in immune response regulation. Provides the membrane anchor for the attachment of the heterotrimeric complex to the cell surface. The protein is Lymphotoxin-beta (LTB) of Pan troglodytes (Chimpanzee).